The sequence spans 198 residues: Protein GrpE (198 aa).

It belongs to the GrpE family. As to quaternary structure, homodimer.

It localises to the cytoplasm. Functionally, participates actively in the response to hyperosmotic and heat shock by preventing the aggregation of stress-denatured proteins, in association with DnaK and GrpE. It is the nucleotide exchange factor for DnaK and may function as a thermosensor. Unfolded proteins bind initially to DnaJ; upon interaction with the DnaJ-bound protein, DnaK hydrolyzes its bound ATP, resulting in the formation of a stable complex. GrpE releases ADP from DnaK; ATP binding to DnaK triggers the release of the substrate protein, thus completing the reaction cycle. Several rounds of ATP-dependent interactions between DnaJ, DnaK and GrpE are required for fully efficient folding. This chain is Protein GrpE, found in Lysinibacillus sphaericus (Bacillus sphaericus).